The chain runs to 600 residues: Probable tripeptidyl-peptidase SED4 (600 aa).

Residues 1–22 form the signal peptide; the sequence is MVSFTLRAIGACLIGLPALITA. A propeptide spans 23–202 (removed in mature form); sequence APTSHVSNGF…SVFTSDLEMT (180 aa). Residues Asn210 and Asn281 are each glycosylated (N-linked (GlcNAc...) asparagine). Residues 212 to 600 form the Peptidase S53 domain; the sequence is TITPDCIREL…FEKLSKLVLI (389 aa). Residues Glu288 and Asp292 each act as charge relay system in the active site. Asn323 and Asn404 each carry an N-linked (GlcNAc...) asparagine glycan. The Charge relay system role is filled by Ser504. 4 residues coordinate Ca(2+): Asp546, Ile547, Gly579, and Asp581.

Ca(2+) serves as cofactor.

It is found in the secreted. It localises to the extracellular space. The catalysed reaction is Release of an N-terminal tripeptide from a polypeptide.. Functionally, secreted tripeptidyl-peptidase which degrades proteins at acidic pHs and is involved in virulence. In Trichophyton verrucosum (strain HKI 0517), this protein is Probable tripeptidyl-peptidase SED4 (SED4).